Consider the following 307-residue polypeptide: Holliday junction branch migration complex subunit RuvB (307 aa).

Positions Met-1–Tyr-167 are large ATPase domain (RuvB-L). ATP is bound by residues Ile-5, Gly-48, Lys-51, Thr-52, Thr-53, Asp-114–Phe-116, Arg-157, Tyr-167, and Arg-204. Thr-52 is a binding site for Mg(2+). The interval Ser-168 to Met-233 is small ATPAse domain (RuvB-S). The interval Lys-236–Cys-307 is head domain (RuvB-H). Residues Lys-289 and Arg-294 each coordinate DNA.

Belongs to the RuvB family. As to quaternary structure, homohexamer. Forms an RuvA(8)-RuvB(12)-Holliday junction (HJ) complex. HJ DNA is sandwiched between 2 RuvA tetramers; dsDNA enters through RuvA and exits via RuvB. An RuvB hexamer assembles on each DNA strand where it exits the tetramer. Each RuvB hexamer is contacted by two RuvA subunits (via domain III) on 2 adjacent RuvB subunits; this complex drives branch migration. In the full resolvosome a probable DNA-RuvA(4)-RuvB(12)-RuvC(2) complex forms which resolves the HJ.

It localises to the cytoplasm. The catalysed reaction is ATP + H2O = ADP + phosphate + H(+). Its function is as follows. The RuvA-RuvB-RuvC complex processes Holliday junction (HJ) DNA during genetic recombination and DNA repair, while the RuvA-RuvB complex plays an important role in the rescue of blocked DNA replication forks via replication fork reversal (RFR). RuvA specifically binds to HJ cruciform DNA, conferring on it an open structure. The RuvB hexamer acts as an ATP-dependent pump, pulling dsDNA into and through the RuvAB complex. RuvB forms 2 homohexamers on either side of HJ DNA bound by 1 or 2 RuvA tetramers; 4 subunits per hexamer contact DNA at a time. Coordinated motions by a converter formed by DNA-disengaged RuvB subunits stimulates ATP hydrolysis and nucleotide exchange. Immobilization of the converter enables RuvB to convert the ATP-contained energy into a lever motion, pulling 2 nucleotides of DNA out of the RuvA tetramer per ATP hydrolyzed, thus driving DNA branch migration. The RuvB motors rotate together with the DNA substrate, which together with the progressing nucleotide cycle form the mechanistic basis for DNA recombination by continuous HJ branch migration. Branch migration allows RuvC to scan DNA until it finds its consensus sequence, where it cleaves and resolves cruciform DNA. This chain is Holliday junction branch migration complex subunit RuvB, found in Mycoplasma pneumoniae (strain ATCC 29342 / M129 / Subtype 1) (Mycoplasmoides pneumoniae).